Here is a 219-residue protein sequence, read N- to C-terminus: 7-cyano-7-deazaguanine synthase (219 aa).

10 to 20 is an ATP binding site; it reads FSGGQDSTTCL. The Zn(2+) site is built by cysteine 188, cysteine 197, cysteine 200, and cysteine 203.

This sequence belongs to the QueC family. Homodimer. Zn(2+) serves as cofactor.

The enzyme catalyses 7-carboxy-7-deazaguanine + NH4(+) + ATP = 7-cyano-7-deazaguanine + ADP + phosphate + H2O + H(+). Its pathway is purine metabolism; 7-cyano-7-deazaguanine biosynthesis. Functionally, catalyzes the ATP-dependent conversion of 7-carboxy-7-deazaguanine (CDG) to 7-cyano-7-deazaguanine (preQ(0)). In Clostridium botulinum (strain Loch Maree / Type A3), this protein is 7-cyano-7-deazaguanine synthase.